A 233-amino-acid polypeptide reads, in one-letter code: MKVGIIGAMEEEVTLLRDKIENRQTLSRAGCEIYTGQLNGIDVALLKSGIGKVSAAMGTTLLLEHCQPDIVINTGSAGGLASSLKVGDIVVSTEVRYHDADVTAFGYEPGQMAGCPAAFIADLKLIELAESCIKQLDLNAVRGLICSGDAFINGAAPLARIRTTFPSVAAVEMEAAAIGHVCYLFKTPFVVVRAISDVADQESHLSFDEFLVVAAKQSTLMIEAMLTSLAKRG.

Glu-12 acts as the Proton acceptor in catalysis. Residues Gly-78, Ile-152, and 173-174 each bind substrate; that span reads ME. Asp-197 serves as the catalytic Proton donor.

The protein belongs to the PNP/UDP phosphorylase family. MtnN subfamily. In terms of assembly, homodimer.

It catalyses the reaction S-adenosyl-L-homocysteine + H2O = S-(5-deoxy-D-ribos-5-yl)-L-homocysteine + adenine. The catalysed reaction is S-methyl-5'-thioadenosine + H2O = 5-(methylsulfanyl)-D-ribose + adenine. It carries out the reaction 5'-deoxyadenosine + H2O = 5-deoxy-D-ribose + adenine. Its pathway is amino-acid biosynthesis; L-methionine biosynthesis via salvage pathway; S-methyl-5-thio-alpha-D-ribose 1-phosphate from S-methyl-5'-thioadenosine (hydrolase route): step 1/2. In terms of biological role, catalyzes the irreversible cleavage of the glycosidic bond in both 5'-methylthioadenosine (MTA) and S-adenosylhomocysteine (SAH/AdoHcy) to adenine and the corresponding thioribose, 5'-methylthioribose and S-ribosylhomocysteine, respectively. Also cleaves 5'-deoxyadenosine, a toxic by-product of radical S-adenosylmethionine (SAM) enzymes, into 5-deoxyribose and adenine. Thus, is required for in vivo function of the radical SAM enzymes biotin synthase and lipoic acid synthase, that are inhibited by 5'-deoxyadenosine accumulation. The sequence is that of 5'-methylthioadenosine/S-adenosylhomocysteine nucleosidase from Yersinia enterocolitica serotype O:8 / biotype 1B (strain NCTC 13174 / 8081).